The sequence spans 518 residues: Glucose-1-phosphate adenylyltransferase large subunit 2, cytosolic (518 aa).

This sequence belongs to the bacterial/plant glucose-1-phosphate adenylyltransferase family. In terms of assembly, heterotetramer composed of two small and two large subunits.

The protein resides in the cytoplasm. It is found in the cytosol. The enzyme catalyses alpha-D-glucose 1-phosphate + ATP + H(+) = ADP-alpha-D-glucose + diphosphate. Its pathway is glycan biosynthesis; starch biosynthesis. Activated by 3'phosphoglycerate, inhibited by orthophosphate. Allosteric regulation. Inhibited by inorganic phosphate (Pi). In terms of biological role, involved in synthesis of starch. Catalyzes the synthesis of ADP-glucose, a molecule that serves as an activated glycosyl donor for alpha-1,4-glucan synthesis. Essential for starch synthesis in seed endosperm. Is essential for both catalytic and allosteric regulatory properties of the cytosolic heterotetramer enzyme. In Oryza sativa subsp. japonica (Rice), this protein is Glucose-1-phosphate adenylyltransferase large subunit 2, cytosolic.